The sequence spans 98 residues: NADH-ubiquinone oxidoreductase chain 4L (98 aa).

3 helical membrane-spanning segments follow: residues 1-21 (MSITYMNMFMAFTISLLGLLL), 29-49 (SLLCLEGMMLSLFVMMTMIIL), and 61-81 (IILLVFAACEAALGLSLLVMV).

The protein belongs to the complex I subunit 4L family. Core subunit of respiratory chain NADH dehydrogenase (Complex I) which is composed of 45 different subunits.

The protein localises to the mitochondrion inner membrane. It carries out the reaction a ubiquinone + NADH + 5 H(+)(in) = a ubiquinol + NAD(+) + 4 H(+)(out). Its function is as follows. Core subunit of the mitochondrial membrane respiratory chain NADH dehydrogenase (Complex I) which catalyzes electron transfer from NADH through the respiratory chain, using ubiquinone as an electron acceptor. Part of the enzyme membrane arm which is embedded in the lipid bilayer and involved in proton translocation. The chain is NADH-ubiquinone oxidoreductase chain 4L (MT-ND4L) from Platyrrhinus dorsalis (Thomas's broad-nosed bat).